Reading from the N-terminus, the 172-residue chain is Urease accessory protein UreE (172 aa).

It belongs to the UreE family.

The protein resides in the cytoplasm. Its function is as follows. Involved in urease metallocenter assembly. Binds nickel. Probably functions as a nickel donor during metallocenter assembly. This Shewanella halifaxensis (strain HAW-EB4) protein is Urease accessory protein UreE.